A 230-amino-acid polypeptide reads, in one-letter code: Ribonuclease 1 (230 aa).

The signal sequence occupies residues 1 to 22 (MKILLASLCLISLLVILPSVFS). RNA is bound at residue Gln38. Residues Cys44 and Cys50 are joined by a disulfide bond. Residues His65, Phe115, 118–119 (HE), and 122–123 (KH) each bind RNA. His65 acts as the Proton donor in catalysis. Intrachain disulfides connect Cys80/Cys126, Cys186/Cys221, and Cys202/Cys213. Glu119 is an active-site residue. His123 (proton acceptor) is an active-site residue.

Belongs to the RNase T2 family.

The catalysed reaction is a ribonucleotidyl-ribonucleotide-RNA + H2O = a 3'-end 3'-phospho-ribonucleotide-RNA + a 5'-end dephospho-ribonucleoside-RNA + H(+). In terms of biological role, may remobilize phosphate, particularly when cells senesce or when phosphate becomes limiting. The protein is Ribonuclease 1 (RNS1) of Arabidopsis thaliana (Mouse-ear cress).